A 319-amino-acid polypeptide reads, in one-letter code: MSVRLGIVMDPIERISYKKDSSLAMLLAAQDRGWTLFYMEQKDLYQNAGQARARMKPLKVFADPAKWFEFEAEIDAGLDDLDVILMRKDPPFDMEFIYTTYLLEQAESAGVLVVNKPQSLRDCNEKLFATLFPQCTPPTLVSRRADILREFAEQQGDVILKPLDGMGGASIFRHRAGDPNLSVILETLTAHGTQQIMAQGYLPAIKDGDKRILMVDGEPVPYCLARIPAAGETRGNLAAGGRGEARPLSDKDRWIAEQIGPTLREKGLLFVGLDVIGEHLTEINVTSPTCIREIDNAFGTNIGGLLMDAIEKKLQARKG.

In terms of domain architecture, ATP-grasp spans 125–311 (EKLFATLFPQ…IGGLLMDAIE (187 aa)). 151–208 (FAEQQGDVILKPLDGMGGASIFRHRAGDPNLSVILETLTAHGTQQIMAQGYLPAIKDG) contacts ATP. Glu-282 and Asn-284 together coordinate Mg(2+).

It belongs to the prokaryotic GSH synthase family. Mg(2+) is required as a cofactor. It depends on Mn(2+) as a cofactor.

It catalyses the reaction gamma-L-glutamyl-L-cysteine + glycine + ATP = glutathione + ADP + phosphate + H(+). Its pathway is sulfur metabolism; glutathione biosynthesis; glutathione from L-cysteine and L-glutamate: step 2/2. This chain is Glutathione synthetase, found in Pseudomonas syringae pv. tomato (strain ATCC BAA-871 / DC3000).